We begin with the raw amino-acid sequence, 261 residues long: Phosphoinositide-3-kinase-interacting protein 1 (261 aa).

A signal peptide spans 1 to 21; the sequence is MLLAWVRTILVSNMLLAEAYG. The Extracellular segment spans residues 22–166; that stretch reads SGGCFWDNGH…NSKEKKDLGT (145 aa). Residues 24–101 enclose the Kringle domain; sequence GCFWDNGHLY…EKRPCQDLRC (78 aa). 3 disulfides stabilise this stretch: cysteine 25–cysteine 101, cysteine 46–cysteine 82, and cysteine 70–cysteine 96. Residues 90–101 show a composition bias toward basic and acidic residues; sequence APEKRPCQDLRC. A disordered region spans residues 90–122; that stretch reads APEKRPCQDLRCPDTTSQGLPTSATETEEAAEV. Residues 167 to 187 traverse the membrane as a helical segment; that stretch reads LGYVLGITMMVIIVVIGAGIV. Over 188 to 261 the chain is Cytoplasmic; that stretch reads LGYTYKRGKD…LMGQAGTPGA (74 aa).

The protein resides in the cell membrane. Functionally, negative regulator of hepatic phosphatidylinositol 3-kinase (PI3K) activity. The chain is Phosphoinositide-3-kinase-interacting protein 1 (PIK3IP1) from Bos taurus (Bovine).